The primary structure comprises 240 residues: MRDELFTEELKKQFEFDERVAGVFDDMLSRSIPYYALALELSADFALANLPKEGGWVYDLGCSTGSLLLEIERRAGAKNPRLIGIDNSEAMLSRARAKALGYGSRVDFIQGDILDFEYQKSEVILCHYTLQFIRPIHRAYLVQKLYDSLKPEGILIFSEKVVSEDRVLDHQMIERYYAYKREQGYSEVEIVKKREALENVLIPYTAKENEKMLLEAGFAHVETLFRWVNFATFIAKKGEA.

S-adenosyl-L-methionine is bound by residues Tyr-35, 61–63 (GCS), 86–87 (DN), 112–113 (DI), and Arg-194.

It belongs to the class I-like SAM-binding methyltransferase superfamily. Cx-SAM synthase family. Homodimer.

The catalysed reaction is prephenate + S-adenosyl-L-methionine = carboxy-S-adenosyl-L-methionine + 3-phenylpyruvate + H2O. Its function is as follows. Catalyzes the conversion of S-adenosyl-L-methionine (SAM) to carboxy-S-adenosyl-L-methionine (Cx-SAM). The chain is Carboxy-S-adenosyl-L-methionine synthase from Wolinella succinogenes (strain ATCC 29543 / DSM 1740 / CCUG 13145 / JCM 31913 / LMG 7466 / NCTC 11488 / FDC 602W) (Vibrio succinogenes).